Here is a 387-residue protein sequence, read N- to C-terminus: Eukaryotic translation initiation factor 3 subunit M (387 aa).

The 160-residue stretch at 181–340 (LSSKVMIELL…RKVHISSTMH (160 aa)) folds into the PCI domain.

Belongs to the eIF-3 subunit M family. Component of the eukaryotic translation initiation factor 3 (eIF-3) complex. The eIF-3 complex interacts with pix.

It is found in the cytoplasm. The protein localises to the golgi apparatus. In terms of biological role, component of the eukaryotic translation initiation factor 3 (eIF-3) complex, which is involved in protein synthesis of a specialized repertoire of mRNAs and, together with other initiation factors, stimulates binding of mRNA and methionyl-tRNAi to the 40S ribosome. The eIF-3 complex specifically targets and initiates translation of a subset of mRNAs involved in cell proliferation. This chain is Eukaryotic translation initiation factor 3 subunit M, found in Drosophila pseudoobscura pseudoobscura (Fruit fly).